Here is an 850-residue protein sequence, read N- to C-terminus: Trimethylguanosine synthase (850 aa).

Positions 54 to 85 (NNAGDRVTEEEEDDHSSGTTESHSADEGDLDP) are disordered. T61 carries the post-translational modification Phosphothreonine. Residues S92 and S152 each carry the phosphoserine modification. Disordered regions lie at residues 278 to 311 (DQNA…DNDH), 327 to 454 (EVEQ…GGIP), and 523 to 566 (ISQE…PENC). Basic and acidic residues predominate over residues 363-374 (TPKESDISENRS). Residues 375–390 (SDQPAQELQESSGTNT) are compositionally biased toward polar residues. S405 and S431 each carry phosphoserine. The span at 424–435 (DIDENPDSEVDD) shows a compositional bias: acidic residues. The segment covering 548–562 (SMEKTDGLMETRDPE) has biased composition (basic and acidic residues). S571 is modified (phosphoserine). A disordered region spans residues 595 to 628 (TEGVANSPRAEAEVEIKKKKKKKKKNKNKKINGL). A compositionally biased stretch (basic residues) spans 611–624 (KKKKKKKKKNKNKK). D713 provides a ligand contact to S-adenosyl-L-methionine.

This sequence belongs to the methyltransferase superfamily. Trimethylguanosine synthase family. As to quaternary structure, may form homooligomers. Interacts with CREBBP/CBP, EED/WAIT1, EP300/P300, NCOA6/PRIP, PPARBP/PBP and SMN. As to expression, a 55 kDa isoform is widely expressed while a 90 kDa isoform is detected exclusively in brain and testis (at protein level).

The protein resides in the cytoplasm. Its subcellular location is the nucleus. It is found in the cajal body. The protein localises to the nucleolus. The enzyme catalyses a 5'-end (N(7)-methyl 5'-triphosphoguanosine)-ribonucleoside in snRNA + S-adenosyl-L-methionine = a 5'-end (N(2),N(7)-dimethyl 5'-triphosphoguanosine)-ribonucleoside in snRNA + S-adenosyl-L-homocysteine + H(+). It catalyses the reaction a 5'-end (N(7)-methyl 5'-triphosphoguanosine)-ribonucleoside in snoRNA + S-adenosyl-L-methionine = a 5'-end (N(2),N(7)-dimethyl 5'-triphosphoguanosine)-ribonucleoside in snoRNA + S-adenosyl-L-homocysteine + H(+). It carries out the reaction a 5'-end (N(2),N(7)-dimethyl 5'-triphosphoguanosine)-ribonucleoside in snRNA + S-adenosyl-L-methionine = a 5'-end (N(2),N(2),N(7)-trimethyl 5'-triphosphoguanosine)-ribonucleoside in snRNA + S-adenosyl-L-homocysteine + H(+). The catalysed reaction is a 5'-end (N(2),N(7)-dimethyl 5'-triphosphoguanosine)-ribonucleoside in snoRNA + S-adenosyl-L-methionine = a 5'-end (N(2),N(2),N(7)-trimethyl 5'-triphosphoguanosine)-ribonucleoside in snoRNA + S-adenosyl-L-homocysteine + H(+). Catalyzes the 2 serial methylation steps for the conversion of the 7-monomethylguanosine (m(7)G) caps of snRNAs and snoRNAs to a 2,2,7-trimethylguanosine (m(2,2,7)G) cap structure. The enzyme is specific for guanine, and N7 methylation must precede N2 methylation. Hypermethylation of the m7G cap of U snRNAs leads to their concentration in nuclear foci, their colocalization with coilin and the formation of canonical Cajal bodies (CBs). Plays a role in transcriptional regulation. This chain is Trimethylguanosine synthase, found in Rattus norvegicus (Rat).